A 275-amino-acid chain; its full sequence is Methylglyoxal reductase DkgA (275 aa).

Catalysis depends on Y51, which acts as the Proton donor. H107 lines the substrate pocket. Residue 187 to 241 (SPLAQGGEGVFDQKVIRELADKYGKTPAQIVIRWHLDCGLVVIPKSVTPSRIAEN) coordinates NADP(+).

Belongs to the aldo/keto reductase family. As to quaternary structure, monomer.

It localises to the cytoplasm. It carries out the reaction hydroxyacetone + NADP(+) = methylglyoxal + NADPH + H(+). Aldo-keto reductase that significantly contributes to cellular methylglyoxal detoxification by catalyzing the NADPH-dependent conversion of methylglyoxal to acetol. This is Methylglyoxal reductase DkgA from Salmonella typhimurium (strain LT2 / SGSC1412 / ATCC 700720).